The chain runs to 894 residues: Peroxisomal hydratase-dehydrogenase-epimerase (894 aa).

Short-chain dehydrogenase like regions lie at residues 6-230 (RFDG…HKNN) and 311-523 (DFKG…CSDK). The NADP(+) site is built by Val-14, Lys-53, Asn-99, Arg-132, Tyr-164, Lys-168, and Ala-197. Tyr-164 (proton acceptor) is an active-site residue. Catalysis depends on Lys-168, which acts as the Lowers pKa of active site Tyr. Tyr-458 acts as the Proton acceptor in catalysis. 3 residues coordinate (3R)-3-hydroxydecanoyl-CoA: His-693, Gly-694, and Lys-723. The segment at 763 to 782 (KKPADRGASTAANKPPARSP) is disordered. The MaoC-like domain maps to 776-887 (KPPARSPDAV…VKETGKLAIS (112 aa)). The (3R)-3-hydroxydecanoyl-CoA site is built by Asp-803, Asn-805, Gly-826, Phe-851, and Gly-853.

Belongs to the short-chain dehydrogenases/reductases (SDR) family. In terms of assembly, monomer.

It localises to the peroxisome. The catalysed reaction is a (3R)-3-hydroxyacyl-CoA = a (2E)-enoyl-CoA + H2O. It carries out the reaction a (3R)-3-hydroxyacyl-CoA + NAD(+) = a 3-oxoacyl-CoA + NADH + H(+). It functions in the pathway lipid metabolism; fatty acid beta-oxidation. Its function is as follows. Second trifunctional enzyme acting on the beta-oxidation pathway for fatty acids, possessing hydratase-dehydrogenase-epimerase activities. Converts trans-2-enoyl-CoA via D-3-hydroxyacyl-CoA to 3-ketoacyl-CoA. The protein is Peroxisomal hydratase-dehydrogenase-epimerase (fox-2) of Neurospora crassa (strain ATCC 24698 / 74-OR23-1A / CBS 708.71 / DSM 1257 / FGSC 987).